The following is a 23-amino-acid chain: Chaperonin GroEL (23 aa).

This sequence belongs to the chaperonin (HSP60) family. Forms a cylinder of 14 subunits composed of two heptameric rings stacked back-to-back. Interacts with the co-chaperonin GroES. Phosphorylated on threonine.

The protein resides in the cytoplasm. The catalysed reaction is ATP + H2O + a folded polypeptide = ADP + phosphate + an unfolded polypeptide.. Its function is as follows. Together with its co-chaperonin GroES, plays an essential role in assisting protein folding. The GroEL-GroES system forms a nano-cage that allows encapsulation of the non-native substrate proteins and provides a physical environment optimized to promote and accelerate protein folding. The sequence is that of Chaperonin GroEL from Acidithiobacillus ferrooxidans (Thiobacillus ferrooxidans).